The following is a 183-amino-acid chain: Capsid protein (183 aa).

Residues 136–183 (NAPILSTLPETTVVRRRGRSPRRRTPSPRRRRSQSPRRRRSQSRESQC) are disordered. Positions 149 to 176 (VRRRGRSPRRRTPSPRRRRSQSPRRRRS) are enriched in basic residues. 3 positions are modified to phosphoserine; by host: serine 155, serine 162, and serine 170. A 1; half-length repeat occupies 155-161 (SPRRRTP). The 3 X 8 AA repeats of S-P-R-R-R-[PR]-S-Q stretch occupies residues 155 to 177 (SPRRRTPSPRRRRSQSPRRRRSQ). The Bipartite nuclear localization signal signature appears at 158 to 175 (RRTPSPRRRRSQSPRRRR). 2 repeat units span residues 162-169 (SPRRRRSQ) and 170-177 (SPRRRRSQ). An RNA binding region spans residues 177–183 (QSRESQC).

It belongs to the orthohepadnavirus core antigen family. In terms of assembly, homodimerizes, then multimerizes. Interacts with cytosol exposed regions of viral L glycoprotein present in the reticulum-to-Golgi compartment. Interacts with human FLNB. Phosphorylated form interacts with host importin alpha; this interaction depends on the exposure of the NLS, which itself depends upon genome maturation and/or phosphorylation of the capsid protein. Interacts with host NUP153. In terms of processing, phosphorylated by host SRPK1, SRPK2, and maybe protein kinase C or GAPDH. Phosphorylation is critical for pregenomic RNA packaging. Protein kinase C phosphorylation is stimulated by HBx protein and may play a role in transport of the viral genome to the nucleus at the late step during the viral replication cycle.

It is found in the virion. It localises to the host cytoplasm. In terms of biological role, self assembles to form an icosahedral capsid. Most capsids appear to be large particles with an icosahedral symmetry of T=4 and consist of 240 copies of capsid protein, though a fraction forms smaller T=3 particles consisting of 180 capsid proteins. Entering capsids are transported along microtubules to the nucleus. Phosphorylation of the capsid is thought to induce exposure of nuclear localization signal in the C-terminal portion of the capsid protein that allows binding to the nuclear pore complex via the importin (karyopherin-) alpha and beta. Capsids are imported in intact form through the nuclear pore into the nuclear basket, where it probably binds NUP153. Only capsids that contain the mature viral genome can release the viral DNA and capsid protein into the nucleoplasm. Immature capsids get stuck in the basket. Capsids encapsulate the pre-genomic RNA and the P protein. Pre-genomic RNA is reverse-transcribed into DNA while the capsid is still in the cytoplasm. The capsid can then either be directed to the nucleus, providing more genomes for transcription, or bud through the endoplasmic reticulum to provide new virions. This is Capsid protein from Hepatitis B virus genotype B1 subtype adw (isolate Japan/pJDW233/1988) (HBV-B).